We begin with the raw amino-acid sequence, 353 residues long: Anthranilate phosphoribosyltransferase (353 aa).

Residues Gly87, 90-91 (GD), Thr95, 97-100 (NIST), 115-123 (KHGNRAASS), and Thr127 contribute to the 5-phospho-alpha-D-ribose 1-diphosphate site. Gly87 serves as a coordination point for anthranilate. Ser99 lines the Mg(2+) pocket. Asn118 contacts anthranilate. Arg173 lines the anthranilate pocket. Asp231 and Glu232 together coordinate Mg(2+).

This sequence belongs to the anthranilate phosphoribosyltransferase family. As to quaternary structure, homodimer. Mg(2+) serves as cofactor.

It catalyses the reaction N-(5-phospho-beta-D-ribosyl)anthranilate + diphosphate = 5-phospho-alpha-D-ribose 1-diphosphate + anthranilate. The protein operates within amino-acid biosynthesis; L-tryptophan biosynthesis; L-tryptophan from chorismate: step 2/5. Its function is as follows. Catalyzes the transfer of the phosphoribosyl group of 5-phosphorylribose-1-pyrophosphate (PRPP) to anthranilate to yield N-(5'-phosphoribosyl)-anthranilate (PRA). The sequence is that of Anthranilate phosphoribosyltransferase from Salinispora arenicola (strain CNS-205).